The sequence spans 293 residues: Acetylglutamate kinase (293 aa).

Substrate is bound by residues 68 to 69 (GG), R90, and N189.

Belongs to the acetylglutamate kinase family. ArgB subfamily.

Its subcellular location is the cytoplasm. It carries out the reaction N-acetyl-L-glutamate + ATP = N-acetyl-L-glutamyl 5-phosphate + ADP. The protein operates within amino-acid biosynthesis; L-arginine biosynthesis; N(2)-acetyl-L-ornithine from L-glutamate: step 2/4. Catalyzes the ATP-dependent phosphorylation of N-acetyl-L-glutamate. The polypeptide is Acetylglutamate kinase (Mycobacterium marinum (strain ATCC BAA-535 / M)).